Here is a 301-residue protein sequence, read N- to C-terminus: Probable alpha-L-glutamate ligase 2 (301 aa).

The 184-residue stretch at 104-287 folds into the ATP-grasp domain; that stretch reads MQLLSRKGIG…VASMIIEFIV (184 aa). Residues Lys141, 178–179, Asp187, and 211–213 contribute to the ATP site; these read EY and RSN. Residues Asp248, Glu260, and Asn262 each contribute to the Mg(2+) site. Residues Asp248, Glu260, and Asn262 each coordinate Mn(2+).

This sequence belongs to the RimK family. It depends on Mg(2+) as a cofactor. Mn(2+) serves as cofactor.

The polypeptide is Probable alpha-L-glutamate ligase 2 (Pseudoalteromonas atlantica (strain T6c / ATCC BAA-1087)).